The primary structure comprises 48 residues: Fimbrial assembly protein, serogroup F1 (48 aa).

In Dichelobacter nodosus (Bacteroides nodosus), this protein is Fimbrial assembly protein, serogroup F1 (fimB).